We begin with the raw amino-acid sequence, 357 residues long: MKFVDEAFIDVAAGDGGNGCVSFRHEKYKEFGGPNGGDGGRGGHVFAVADPSLNTLVDYRYSRRHEAKRGEHGMGSDMFGAAGDDITLKMPVGTIISDADTGEVLFELLKPGETITIAKGGDGGFGNMRFKSAINRAPRQKTPGWPGERRNLKLELKVLADVGLLGMPNAGKSTFIAAVSNARPKIADYPFTTLHPNLGVVRVGPEQSFVVADIPGLIEGASEGAGLGHQFLRHLQRTRLLLHVVDLAPFDESVDPVAQATAIVGELRKYDAELYEKPRWLVLNKLDMVPGDERAARVKDFVKRFRWKGPVFEISALTREGCEPLIQAIYQHVRAQQQAEQVQEVVDPRFADDAASD.

The Obg domain occupies 1 to 159 (MKFVDEAFID…RNLKLELKVL (159 aa)). The 175-residue stretch at 160–334 (ADVGLLGMPN…LIQAIYQHVR (175 aa)) folds into the OBG-type G domain. Residues 166–173 (GMPNAGKS), 191–195 (FTTLH), 213–216 (DIPG), 284–287 (NKLD), and 315–317 (SAL) contribute to the GTP site. Residues S173 and T193 each contribute to the Mg(2+) site.

This sequence belongs to the TRAFAC class OBG-HflX-like GTPase superfamily. OBG GTPase family. Monomer. It depends on Mg(2+) as a cofactor.

It localises to the cytoplasm. In terms of biological role, an essential GTPase which binds GTP, GDP and possibly (p)ppGpp with moderate affinity, with high nucleotide exchange rates and a fairly low GTP hydrolysis rate. Plays a role in control of the cell cycle, stress response, ribosome biogenesis and in those bacteria that undergo differentiation, in morphogenesis control. This Paracidovorax citrulli (strain AAC00-1) (Acidovorax citrulli) protein is GTPase Obg.